The following is a 1039-amino-acid chain: MTSLQHIINRRDWENPITVQVNQVKAHSPLNGFKTIEDARENTQSQKKSLNGQWDFKLFDKPEAVDESLLYEKISKELSGDWQSITVPSNWQLHGFDKPIYCNVKYPFAVNPPFVPSDNPTGCYRTEFTITPEQLTQRNHIIFEGVNSAFHLWCNGQWVGYSQDSRLPSEFDLSELLVVGTNRIAVMVIRWSDGSYLEDQDMWWLSGIFRDVNLLTKPQSQIRDVFITPDLDACYRDATLHIKTAINAPNNYQVAVQIFDGKTSLCEPKIQSTNNKRVDEKGGWSDVVFQTIAIRSPKKWTAETPYLYRCVVSLLDEQGNTVDVEAYNIGFRKVEMLNGQLCVNGKPLLIRGVNRHEHHPENGHAVSTADMIEDIKLMKQNNFNAVRTAHYPNHPLFYELCDELGLYVVDEANIETHGMFPMGRLASDPLWAGAFMSRYTQMVERDKNHASIIIWSLGNECGHGANHDAMYGWSKSFDPSRPVQYEGGGANTTATDIICPMYSRVDTDIKDDAVPKYSIKKWLSLPGETRPLILCEYAHAMGNSLGSFDDYWQAFREYPRLQGGFIWDWVDQGLSKIDENGKHYWAYGGDFGDELNDRQFCINGLLFPDRTPHPSLFEAKYSQQHLQFTLREQNQNQNQNQYSIDVFSDYVFRHTDNEKLVWQLIQNGVCVEQGEMALNIAPQSTHTLTIKTKTAFEHGAQYYLNLDVALINDSHFANANHVMDSEQFKLINSNNLNSKSFASATEKSVISVNETDSHLSIENNTFKLVFNQQSGLIEQWLQDDTQVISSPLVDNFYRAPLDNDIGVSEVDNLDPNAWEARWSRAGIGQWQRTCSSINAVQSSVDVRITCVFNYEFNGVLQAQTQWLYTLNNTGTISLNVDVNLNDTLPPMPRIGLSTTINKQSDTKVNWLGLGPFENYPDRKSAARFGYYSLSLNELYTPYIFPTDNGLRSDCQLLSINNLIVTGAFLFAASEYSQNMLTQAKHTNELIADDCIHVHIDHQHMGVGGDDSWSPSTHKEYLLEQKNYNYSLTLTGGITT.

Substrate contacts are provided by Asn-103 and Asp-201. Asp-201 contacts Na(+). Positions 415, 417, and 460 each coordinate Mg(2+). Residues Glu-460 and 536-539 (EYAH) contribute to the substrate site. Glu-460 functions as the Proton donor in the catalytic mechanism. The active-site Nucleophile is the Glu-536. Residue Asn-596 participates in Mg(2+) binding. Phe-600 and Asn-603 together coordinate Na(+). Residues Asn-603 and Trp-1012 each coordinate substrate.

Belongs to the glycosyl hydrolase 2 family. As to quaternary structure, homotetramer. The cofactor is Mg(2+). Na(+) is required as a cofactor.

The enzyme catalyses Hydrolysis of terminal non-reducing beta-D-galactose residues in beta-D-galactosides.. Inhibited by zinc, copper and nickel ions. Activated by 2-mercaptoethanol and inhibited by EDTA in vitro. The protein is Beta-galactosidase (lacZ) of Pseudoalteromonas haloplanktis (Alteromonas haloplanktis).